The primary structure comprises 116 residues: MNTVVDTPELMVFTDSAAMKVKELIEEEGNPELKLRVFVSGGGCSGFQYGFTFDEEVNEDDTAFEKNGVTLLVDPMSYQYLVGAEIDYSEGLEGSQFVIRNPNATSTCGCGSSFSA.

Residues Cys-44, Cys-108, and Cys-110 each contribute to the iron-sulfur cluster site.

Belongs to the HesB/IscA family. As to quaternary structure, homodimer. Iron-sulfur cluster is required as a cofactor.

Required for insertion of 4Fe-4S clusters. The sequence is that of Putative iron-sulfur cluster insertion protein ErpA from Aromatoleum aromaticum (strain DSM 19018 / LMG 30748 / EbN1) (Azoarcus sp. (strain EbN1)).